The primary structure comprises 135 residues: Interleukin-4 (135 aa).

The N-terminal stretch at 1 to 24 (MGLTSQLIPVLVCLLVCTSHFVHG) is a signal peptide. Disulfide bonds link C27–C135, C48–C85, and C70–C105. A glycan (N-linked (GlcNAc...) asparagine) is linked at N62.

The protein belongs to the IL-4/IL-13 family.

It localises to the secreted. Participates in at least several B-cell activation processes as well as of other cell types. It is a costimulator of DNA-synthesis. It induces the expression of class II MHC molecules on resting B-cells. It enhances both secretion and cell surface expression of IgE and IgG1. It also regulates the expression of the low affinity Fc receptor for IgE (CD23) on both lymphocytes and monocytes. Positively regulates IL31RA expression in macrophages. Stimulates autophagy in dendritic cells by interfering with mTORC1 signaling and through the induction of RUFY4. This Bos taurus (Bovine) protein is Interleukin-4 (IL4).